We begin with the raw amino-acid sequence, 160 residues long: Crossover junction endodeoxyribonuclease RuvC (160 aa).

Catalysis depends on residues Asp-7, Glu-70, and Asp-142. Residues Asp-7, Glu-70, and Asp-142 each contribute to the Mg(2+) site.

This sequence belongs to the RuvC family. Homodimer which binds Holliday junction (HJ) DNA. The HJ becomes 2-fold symmetrical on binding to RuvC with unstacked arms; it has a different conformation from HJ DNA in complex with RuvA. In the full resolvosome a probable DNA-RuvA(4)-RuvB(12)-RuvC(2) complex forms which resolves the HJ. Mg(2+) is required as a cofactor.

The protein resides in the cytoplasm. The catalysed reaction is Endonucleolytic cleavage at a junction such as a reciprocal single-stranded crossover between two homologous DNA duplexes (Holliday junction).. Functionally, the RuvA-RuvB-RuvC complex processes Holliday junction (HJ) DNA during genetic recombination and DNA repair. Endonuclease that resolves HJ intermediates. Cleaves cruciform DNA by making single-stranded nicks across the HJ at symmetrical positions within the homologous arms, yielding a 5'-phosphate and a 3'-hydroxyl group; requires a central core of homology in the junction. The consensus cleavage sequence is 5'-(A/T)TT(C/G)-3'. Cleavage occurs on the 3'-side of the TT dinucleotide at the point of strand exchange. HJ branch migration catalyzed by RuvA-RuvB allows RuvC to scan DNA until it finds its consensus sequence, where it cleaves and resolves the cruciform DNA. The chain is Crossover junction endodeoxyribonuclease RuvC from Ehrlichia ruminantium (strain Welgevonden).